A 28-amino-acid chain; its full sequence is EVVRSNNFDPSKLSGKWYSILLASDRKE.

The protein belongs to the calycin superfamily. Lipocalin family. Nasal mucosa.

It is found in the secreted. The protein resides in the extracellular space. This soluble protein may play a specific role in odor discrimination and perception. In Hystrix cristata (North African crested porcupine), this protein is Odorant-binding protein 1.